Reading from the N-terminus, the 599-residue chain is DNA primase (599 aa).

Residues 38–62 form a CHC2-type zinc finger; it reads CPFHQEKTPSFTVSDSKRFFYCFGC. The Toprim domain maps to 250-332; sequence NYSILVEGYF…EKKISFIRLP (83 aa). E256, D300, and D302 together coordinate Mg(2+).

It belongs to the DnaG primase family. As to quaternary structure, monomer. Interacts with DnaB. Requires Zn(2+) as cofactor. Mg(2+) serves as cofactor.

It carries out the reaction ssDNA + n NTP = ssDNA/pppN(pN)n-1 hybrid + (n-1) diphosphate.. Its function is as follows. RNA polymerase that catalyzes the synthesis of short RNA molecules used as primers for DNA polymerase during DNA replication. This chain is DNA primase, found in Rickettsia bellii (strain RML369-C).